The following is a 397-amino-acid chain: Histidinol-phosphate aminotransferase (397 aa).

Lys-247 is subject to N6-(pyridoxal phosphate)lysine.

This sequence belongs to the class-II pyridoxal-phosphate-dependent aminotransferase family. Histidinol-phosphate aminotransferase subfamily. Homodimer. Requires pyridoxal 5'-phosphate as cofactor.

It catalyses the reaction L-histidinol phosphate + 2-oxoglutarate = 3-(imidazol-4-yl)-2-oxopropyl phosphate + L-glutamate. It participates in amino-acid biosynthesis; L-histidine biosynthesis; L-histidine from 5-phospho-alpha-D-ribose 1-diphosphate: step 7/9. The polypeptide is Histidinol-phosphate aminotransferase (Frankia casuarinae (strain DSM 45818 / CECT 9043 / HFP020203 / CcI3)).